A 234-amino-acid chain; its full sequence is uncharacterized protein (234 aa).

This is an uncharacterized protein from Escherichia coli (strain K12).